A 527-amino-acid polypeptide reads, in one-letter code: TnpB-like protein R854 (527 aa).

Residues 21–36 are compositionally biased toward basic residues; it reads GSKTKKKVFVKKKPPA. The tract at residues 21–50 is disordered; sequence GSKTKKKVFVKKKPPAKKPPDKKPLKKTTK. Zn(2+) contacts are provided by C481, C484, C498, and C501.

The protein in the central section; belongs to the transposase 2 family. It in the C-terminal section; belongs to the transposase 35 family.

The sequence is that of TnpB-like protein R854 from Acanthamoeba polyphaga mimivirus (APMV).